A 1145-amino-acid chain; its full sequence is Protocadherin-19 (1145 aa).

A signal peptide spans Met-1 to Ala-21. 6 consecutive Cadherin domains span residues Leu-22–Phe-129, Pro-130–Phe-238, Gly-239–Ile-346, Ser-350–Phe-453, Ser-454–Ile-563, and Ile-569–Met-672. At Leu-22–Ser-678 the chain is on the extracellular side. Glu-31, Glu-32, Asp-88, and Asp-90 together coordinate Ca(2+). Cys-93 and Cys-99 are joined by a disulfide. Ca(2+) contacts are provided by Asp-121, Asn-123, Asp-124, Asn-125, Glu-140, Asp-155, Asp-157, Glu-199, Asp-212, Asp-230, Ser-231, Asn-232, Asp-233, Asn-234, and Glu-249. N-linked (GlcNAc...) asparagine glycosylation is present at Asn-261. Residues Asp-264, Asp-266, Asn-270, Asp-305, Glu-307, Asp-338, Asn-340, Asp-341, Asn-342, Glu-360, Asp-375, Asp-377, Asn-381, Asp-412, and Glu-414 each coordinate Ca(2+). N-linked (GlcNAc...) asparagine glycosylation occurs at Asn-420. 13 residues coordinate Ca(2+): Asp-427, Asp-445, Glu-446, Asn-447, Asp-448, Asn-449, Glu-464, Asp-479, Asp-481, Asn-485, Asn-522, Glu-524, and Asp-537. An N-linked (GlcNAc...) asparagine glycan is attached at Asn-485. Residue Asn-546 is glycosylated (N-linked (GlcNAc...) asparagine). 5 residues coordinate Ca(2+): Asp-555, Val-556, Asn-557, Asp-558, and Asn-559. The N-linked (GlcNAc...) asparagine glycan is linked to Asn-570. Asp-594, Asp-596, Asn-600, and Asp-646 together coordinate Ca(2+). A glycan (N-linked (GlcNAc...) asparagine) is linked at Asn-676. A helical membrane pass occupies residues Leu-679 to Val-699. Over Ala-700–Leu-1145 the chain is Cytoplasmic. 2 disordered regions span residues Gly-901–Val-921 and Leu-1094–Leu-1145. 2 stretches are compositionally biased toward basic and acidic residues: residues Asp-906–Val-921 and Ser-1106–Leu-1145.

In terms of assembly, homodimer; antiparallel.

It is found in the cell membrane. Calcium-dependent cell-adhesion protein. This is Protocadherin-19 (Pcdh19) from Mus musculus (Mouse).